The primary structure comprises 366 residues: Probable quinol oxidase subunit 2 (366 aa).

Positions Met1–Gly19 are cleaved as a signal peptide. Cys20 carries N-palmitoyl cysteine lipidation. Cys20 is lipidated: S-diacylglycerol cysteine. A run of 2 helical transmembrane segments spans residues Phe38 to Phe58 and Ala80 to Pro100. The disordered stretch occupies residues Glu330–His366. Residues Glu335–His366 show a composition bias toward basic and acidic residues.

The protein belongs to the cytochrome c oxidase subunit 2 family.

The protein localises to the cell membrane. It carries out the reaction 2 a quinol + O2 = 2 a quinone + 2 H2O. Its function is as follows. Catalyzes quinol oxidation with the concomitant reduction of oxygen to water. Subunit II transfers the electrons from a quinol to the binuclear center of the catalytic subunit I. This is Probable quinol oxidase subunit 2 (qoxA) from Staphylococcus aureus (strain bovine RF122 / ET3-1).